A 157-amino-acid chain; its full sequence is NudC domain-containing protein 2 (157 aa).

At Ser2 the chain carries N-acetylserine. Positions 14–104 constitute a CS domain; the sequence is CATPWGQWYQ…DAANCWTSLL (91 aa). Residues 134-157 form a disordered region; it reads FDFSGAEISGNYTKGGPDFSNLEK. The residue at position 142 (Ser142) is a Phosphoserine. The residue at position 145 (Tyr145) is a Phosphotyrosine.

In terms of assembly, interacts with LIS1.

It is found in the chromosome. It localises to the centromere. The protein localises to the kinetochore. The protein resides in the cytoplasm. Its subcellular location is the cytoskeleton. It is found in the microtubule organizing center. It localises to the centrosome. The protein localises to the spindle pole. Functionally, may regulate the LIS1/dynein pathway by stabilizing LIS1 with Hsp90 chaperone. The polypeptide is NudC domain-containing protein 2 (Nudcd2) (Rattus norvegicus (Rat)).